Here is a 205-residue protein sequence, read N- to C-terminus: Holliday junction branch migration complex subunit RuvA (205 aa).

Residues 1–64 (MIGKLKGLID…EDQIKLFGFR (64 aa)) are domain I. Residues 65–143 (TDHEREWFRL…ALSNVDPAVV (79 aa)) form a domain II region. Residues 144–154 (QLSGALDDNRA) form a flexible linker region. The tract at residues 154–205 (APRPVTDAISALVNLGYGQPQAAAAIAAAARAAGDDAATAQLIKLGLKELSK) is domain III.

The protein belongs to the RuvA family. As to quaternary structure, homotetramer. Forms an RuvA(8)-RuvB(12)-Holliday junction (HJ) complex. HJ DNA is sandwiched between 2 RuvA tetramers; dsDNA enters through RuvA and exits via RuvB. An RuvB hexamer assembles on each DNA strand where it exits the tetramer. Each RuvB hexamer is contacted by two RuvA subunits (via domain III) on 2 adjacent RuvB subunits; this complex drives branch migration. In the full resolvosome a probable DNA-RuvA(4)-RuvB(12)-RuvC(2) complex forms which resolves the HJ.

The protein localises to the cytoplasm. The RuvA-RuvB-RuvC complex processes Holliday junction (HJ) DNA during genetic recombination and DNA repair, while the RuvA-RuvB complex plays an important role in the rescue of blocked DNA replication forks via replication fork reversal (RFR). RuvA specifically binds to HJ cruciform DNA, conferring on it an open structure. The RuvB hexamer acts as an ATP-dependent pump, pulling dsDNA into and through the RuvAB complex. HJ branch migration allows RuvC to scan DNA until it finds its consensus sequence, where it cleaves and resolves the cruciform DNA. The chain is Holliday junction branch migration complex subunit RuvA from Rhodopseudomonas palustris (strain BisB5).